A 105-amino-acid polypeptide reads, in one-letter code: BLOC-1-related complex subunit 7 (105 aa).

This sequence belongs to the BORCS7 family. In terms of assembly, component of the BLOC-one-related complex (BORC) which is composed of BLOC1S1, BLOC1S2, BORCS5, BORCS6, BORCS7, BORCS8, KXD1 and SNAPIN.

The protein localises to the lysosome membrane. Functionally, as part of the BORC complex may play a role in lysosomes movement and localization at the cell periphery. Associated with the cytosolic face of lysosomes, the BORC complex may recruit ARL8B and couple lysosomes to microtubule plus-end-directed kinesin motor. This chain is BLOC-1-related complex subunit 7, found in Mus musculus (Mouse).